Consider the following 93-residue polypeptide: Small ribosomal subunit protein uS19 (93 aa).

Disordered regions lie at residues 1 to 24 and 73 to 93; these read MPRS…AQNE and EFAP…GRRR. Composition is skewed to basic and acidic residues over residues 9–21 and 81–93; these read PFVD…KVDA and KGHE…GRRR.

This sequence belongs to the universal ribosomal protein uS19 family.

Its function is as follows. Protein S19 forms a complex with S13 that binds strongly to the 16S ribosomal RNA. This Kineococcus radiotolerans (strain ATCC BAA-149 / DSM 14245 / SRS30216) protein is Small ribosomal subunit protein uS19.